Here is a 351-residue protein sequence, read N- to C-terminus: UDP-3-O-acylglucosamine N-acyltransferase (351 aa).

The active-site Proton acceptor is His-240.

Belongs to the transferase hexapeptide repeat family. LpxD subfamily. In terms of assembly, homotrimer.

The catalysed reaction is a UDP-3-O-[(3R)-3-hydroxyacyl]-alpha-D-glucosamine + a (3R)-hydroxyacyl-[ACP] = a UDP-2-N,3-O-bis[(3R)-3-hydroxyacyl]-alpha-D-glucosamine + holo-[ACP] + H(+). It participates in bacterial outer membrane biogenesis; LPS lipid A biosynthesis. Its function is as follows. Catalyzes the N-acylation of UDP-3-O-acylglucosamine using 3-hydroxyacyl-ACP as the acyl donor. Is involved in the biosynthesis of lipid A, a phosphorylated glycolipid that anchors the lipopolysaccharide to the outer membrane of the cell. The protein is UDP-3-O-acylglucosamine N-acyltransferase of Pseudomonas fluorescens (strain ATCC BAA-477 / NRRL B-23932 / Pf-5).